The chain runs to 133 residues: Profilin-1 (133 aa).

Cys-95 and Cys-117 form a disulfide bridge.

Belongs to the profilin family. In terms of assembly, dimer and tetramer. Occurs in many kinds of cells as a complex with monomeric actin in a 1:1 ratio.

The protein resides in the cytoplasm. The protein localises to the cytoskeleton. Binds to actin and affects the structure of the cytoskeleton. At high concentrations, profilin prevents the polymerization of actin, whereas it enhances it at low concentrations. By binding to PIP2, it inhibits the formation of IP3 and DG. Possesses high binding affinity for poly(L-proline). The chain is Profilin-1 from Artemisia vulgaris (Mugwort).